Here is a 338-residue protein sequence, read N- to C-terminus: Large ribosomal subunit protein uL3 (338 aa).

Positions 1–37 are disordered; it reads MPQPSRPRKGSMGFSPRKRAESEVPRIRSWASNDGAP.

The protein belongs to the universal ribosomal protein uL3 family. In terms of assembly, part of the 50S ribosomal subunit. Forms a cluster with proteins L14 and L24e.

One of the primary rRNA binding proteins, it binds directly near the 3'-end of the 23S rRNA, where it nucleates assembly of the 50S subunit. The chain is Large ribosomal subunit protein uL3 from Haloquadratum walsbyi (strain DSM 16790 / HBSQ001).